The primary structure comprises 355 residues: Syntaxin-5 (355 aa).

Residues Met1–Arg333 are Cytoplasmic-facing. A compositionally biased stretch (polar residues) spans Pro28–Asp37. The disordered stretch occupies residues Pro28–Pro51. A compositionally biased stretch (pro residues) spans Pro40 to Pro51. The short motif at Ile245–Met247 is the IxM motif; signal for cargo packaging into COPII-coated vesicles element. In terms of domain architecture, t-SNARE coiled-coil homology spans Asp263 to Tyr325. The stretch at Phe287–Ala318 forms a coiled coil. Residues Trp334–Leu354 form a helical; Anchor for type IV membrane protein membrane-spanning segment. Ala355 is a topological domain (vesicular).

Belongs to the syntaxin family. In terms of assembly, part of a ternary complex containing STX5A, NSFL1C and VCP. Identified in a unique SNARE complex composed of the Golgi SNAREs GOSR1, GOSR2, YKT6 and VTI1A. Component of a SNARE complex consisting of STX5, YKT6, GOSR1 and BET1L. Interacts with BET1L. Interacts with BET1. Interacts with COG4. Interacts with GM130/GOLGA2. Interacts (via IxM motif) with SEC24C and SEC24D; mediates STX5 packaging into COPII-coated vesicles. Interacts with VLDLR; this interaction mediates VLDLR translocation from the endoplasmic reticulum to the plasma membrane.

It localises to the endoplasmic reticulum-Golgi intermediate compartment membrane. The protein localises to the golgi apparatus membrane. Its function is as follows. Mediates endoplasmic reticulum to Golgi transport. Together with p115/USO1 and GM130/GOLGA2, involved in vesicle tethering and fusion at the cis-Golgi membrane to maintain the stacked and inter-connected structure of the Golgi apparatus. Functionally, required for Golgi to endoplasmic reticulum retrogade transport, and for intra-Golgi transport. In terms of biological role, (Microbial infection) Required for the efficient production of infectious virion during human cytomegalovirus infection. Mechanistically, participates in the formation of the cytoplasmic viral assembly compartment where tegument acquisition and envelopment occur. The sequence is that of Syntaxin-5 (STX5) from Homo sapiens (Human).